The chain runs to 618 residues: Dihydroxy-acid dehydratase (618 aa).

Residue aspartate 81 participates in Mg(2+) binding. Cysteine 122 contacts [2Fe-2S] cluster. The Mg(2+) site is built by aspartate 123 and lysine 124. N6-carboxylysine is present on lysine 124. Cysteine 197 contributes to the [2Fe-2S] cluster binding site. Glutamate 493 serves as a coordination point for Mg(2+). Serine 519 acts as the Proton acceptor in catalysis.

This sequence belongs to the IlvD/Edd family. In terms of assembly, homodimer. The cofactor is [2Fe-2S] cluster. Requires Mg(2+) as cofactor.

The enzyme catalyses (2R)-2,3-dihydroxy-3-methylbutanoate = 3-methyl-2-oxobutanoate + H2O. It catalyses the reaction (2R,3R)-2,3-dihydroxy-3-methylpentanoate = (S)-3-methyl-2-oxopentanoate + H2O. The protein operates within amino-acid biosynthesis; L-isoleucine biosynthesis; L-isoleucine from 2-oxobutanoate: step 3/4. It functions in the pathway amino-acid biosynthesis; L-valine biosynthesis; L-valine from pyruvate: step 3/4. Functions in the biosynthesis of branched-chain amino acids. Catalyzes the dehydration of (2R,3R)-2,3-dihydroxy-3-methylpentanoate (2,3-dihydroxy-3-methylvalerate) into 2-oxo-3-methylpentanoate (2-oxo-3-methylvalerate) and of (2R)-2,3-dihydroxy-3-methylbutanoate (2,3-dihydroxyisovalerate) into 2-oxo-3-methylbutanoate (2-oxoisovalerate), the penultimate precursor to L-isoleucine and L-valine, respectively. The protein is Dihydroxy-acid dehydratase of Bordetella avium (strain 197N).